We begin with the raw amino-acid sequence, 279 residues long: Acyl-[acyl-carrier-protein]--UDP-N-acetylglucosamine O-acyltransferase (279 aa).

The segment at 260-279 (AAKEAFQEESVDKEGALVES) is disordered.

It belongs to the transferase hexapeptide repeat family. LpxA subfamily. Homotrimer.

Its subcellular location is the cytoplasm. The enzyme catalyses a (3R)-hydroxyacyl-[ACP] + UDP-N-acetyl-alpha-D-glucosamine = a UDP-3-O-[(3R)-3-hydroxyacyl]-N-acetyl-alpha-D-glucosamine + holo-[ACP]. It participates in glycolipid biosynthesis; lipid IV(A) biosynthesis; lipid IV(A) from (3R)-3-hydroxytetradecanoyl-[acyl-carrier-protein] and UDP-N-acetyl-alpha-D-glucosamine: step 1/6. In terms of biological role, involved in the biosynthesis of lipid A, a phosphorylated glycolipid that anchors the lipopolysaccharide to the outer membrane of the cell. The polypeptide is Acyl-[acyl-carrier-protein]--UDP-N-acetylglucosamine O-acyltransferase (Chlamydia abortus (strain DSM 27085 / S26/3) (Chlamydophila abortus)).